The following is a 686-amino-acid chain: DNA ligase 1 (686 aa).

Residues 35–39 (DFEYD), 84–85 (SL), and Glu-119 each bind NAD(+). Lys-121 (N6-AMP-lysine intermediate) is an active-site residue. The NAD(+) site is built by Arg-142, Glu-177, Lys-293, and Lys-317. Positions 411, 414, 429, and 434 each coordinate Zn(2+). The 85-residue stretch at 602–686 (RVGEQLAGLT…LAEKGAPPLP (85 aa)) folds into the BRCT domain.

Belongs to the NAD-dependent DNA ligase family. LigA subfamily. It depends on Mg(2+) as a cofactor. Requires Mn(2+) as cofactor.

The enzyme catalyses NAD(+) + (deoxyribonucleotide)n-3'-hydroxyl + 5'-phospho-(deoxyribonucleotide)m = (deoxyribonucleotide)n+m + AMP + beta-nicotinamide D-nucleotide.. DNA ligase that catalyzes the formation of phosphodiester linkages between 5'-phosphoryl and 3'-hydroxyl groups in double-stranded DNA using NAD as a coenzyme and as the energy source for the reaction. It is essential for DNA replication and repair of damaged DNA. The chain is DNA ligase 1 from Deinococcus deserti (strain DSM 17065 / CIP 109153 / LMG 22923 / VCD115).